The following is a 161-amino-acid chain: Cyclic pyranopterin monophosphate synthase (161 aa).

Residues 75–77 (LCH) and 113–114 (ME) each bind substrate. Aspartate 128 is a catalytic residue.

The protein belongs to the MoaC family. Homohexamer; trimer of dimers.

It catalyses the reaction (8S)-3',8-cyclo-7,8-dihydroguanosine 5'-triphosphate = cyclic pyranopterin phosphate + diphosphate. It functions in the pathway cofactor biosynthesis; molybdopterin biosynthesis. Functionally, catalyzes the conversion of (8S)-3',8-cyclo-7,8-dihydroguanosine 5'-triphosphate to cyclic pyranopterin monophosphate (cPMP). The sequence is that of Cyclic pyranopterin monophosphate synthase from Erwinia tasmaniensis (strain DSM 17950 / CFBP 7177 / CIP 109463 / NCPPB 4357 / Et1/99).